The sequence spans 216 residues: Dimethylamine corrinoid protein 2 (216 aa).

One can recognise a B12-binding N-terminal domain in the interval 1-91 (MASKEELLQE…EMPAGTETKK (91 aa)). In terms of domain architecture, B12-binding spans 92-216 (LGVIVNGTVE…AKAKELLLGK (125 aa)). His-105 is a methylcob(III)alamin binding site.

Belongs to the methylamine corrinoid protein family.

It participates in one-carbon metabolism; methanogenesis from dimethylamine. Functionally, acts as a methyl group carrier between MtbB and MtbA. The chain is Dimethylamine corrinoid protein 2 (mtbC2) from Methanosarcina acetivorans (strain ATCC 35395 / DSM 2834 / JCM 12185 / C2A).